The chain runs to 350 residues: Delta(6)-protoilludene synthase STEHIDRAFT_64702 (350 aa).

Mg(2+) contacts are provided by Asp89, Asn225, Ser229, and Glu233. The D(D/E)XX(D/E) motif motif lies at 89 to 93; the sequence is DEHSD. An NSE motif motif is present at residues 225–233; the sequence is NDIVSYNIE. Residues Arg314 and Tyr315 each contribute to the (2E,6E)-farnesyl diphosphate site.

It belongs to the terpene synthase family. Requires Mg(2+) as cofactor. It depends on Mn(2+) as a cofactor. Ca(2+) is required as a cofactor. Ni(2+) serves as cofactor. The cofactor is Co(2+).

It catalyses the reaction (2E,6E)-farnesyl diphosphate = Delta(6)-protoilludene + diphosphate. It carries out the reaction (2E,6E)-farnesyl diphosphate = alpha-selinene + diphosphate. Ca(2+) switches the cyclization mechanism of delta(6)-protoilludene synthase from 1,11 to 1,10 cyclization which leads to the production of beta-elemene. Terpene cyclase that catalyzes the cyclization of farnesyl diphosphate (FPP) to delta(6)-protoilludene. In presence of Ca(2+), a significant switch from 1,11 to a dual 1,11/1,10 cyclization occurs, producing beta-elemene as the major product, with lower levels of delta(6)-protoilludene and (E)-beta-caryophyllene, and traces of beta-selinene and alpha-selinene. The polypeptide is Delta(6)-protoilludene synthase STEHIDRAFT_64702 (Stereum hirsutum (strain FP-91666) (White-rot fungus)).